A 573-amino-acid chain; its full sequence is Sulfite oxidase, mitochondrial (573 aa).

The transit peptide at 1–34 (MRLLRPSWAGLLRGRHHQHQRHHRRLLLTTSRGS) directs the protein to the mitochondrion. The span at 14-26 (GRHHQHQRHHRRL) shows a compositional bias: basic residues. Residues 14 to 50 (GRHHQHQRHHRRLLLTTSRGSNGEREEQQHSQWSSPG) are disordered. The 79-residue stretch at 108-186 (LPTYRAEEVE…LEGFRIGNLE (79 aa)) folds into the Cytochrome b5 heme-binding domain. The heme b site is built by H144 and H168. The interval 190-199 (VTNVDDELGS) is hinge. Residues 200 to 423 (PWSQEPQRHA…DSHWQQNDYK (224 aa)) form a moco domain region. Residues 240–244 (YVRNH), C287, D344, H383, R388, and 399–401 (NVK) contribute to the Mo-molybdopterin site. The homodimerization stretch occupies residues 424–567 (GFSPSTDWDT…RGVLANAYHK (144 aa)).

Requires heme b as cofactor. Mo-molybdopterin is required as a cofactor. In terms of tissue distribution, expressed in the ensheathing glia with relatively weak expression in the CNS cortex (at protein level).

Its subcellular location is the mitochondrion intermembrane space. It carries out the reaction sulfite + O2 + H2O = sulfate + H2O2. It functions in the pathway energy metabolism; sulfur metabolism. Its function is as follows. Required in ensheathing glial cells for normal larval locomotion. Oxidizes sulfite which is required to maintain glutamate homeostasis and as a consequence, neuronal network function. In Drosophila melanogaster (Fruit fly), this protein is Sulfite oxidase, mitochondrial.